Reading from the N-terminus, the 681-residue chain is Hydroxyproline O-galactosyltransferase GALT6 (681 aa).

At 1–28 (MRKPKLSKLERLEKFDIFVSLSKQRSVQ) the chain is on the cytoplasmic side. A helical; Signal-anchor for type II membrane protein membrane pass occupies residues 29–49 (ILMAVGLLYMLLITFEIPFVF). The Lumenal segment spans residues 50 to 681 (KTGLSSLSQD…TGKPQCCNMR (632 aa)). Residues 57-80 (SQDPLTRPEKHNSQRELQERRAPT) form a disordered region. The segment covering 62–78 (TRPEKHNSQRELQERRA) has biased composition (basic and acidic residues). The region spanning 187–401 (NIMELPCGLT…DIDVHSVFAG (215 aa)) is the Galectin domain. Residue asparagine 629 is glycosylated (N-linked (GlcNAc...) asparagine).

The protein belongs to the glycosyltransferase 31 family. Requires Mn(2+) as cofactor. In terms of tissue distribution, expressed in junveile leaves and stems, and at lower levels in cauline leaves and siliques.

It is found in the golgi apparatus membrane. It participates in protein modification; protein glycosylation. In terms of biological role, possesses hydroxyproline O-galactosyltransferase activity. Transfers galactose from UDP-galactose to hydroxyproline residues in the arabinogalactan proteins (AGPs). Is specific for AGPs containing non-contiguous peptidyl hydroxyproline residues. Utilizes UDP-galactose solely as sugar donor. The addition of galactose onto the peptidyl hydroxyproline residues in AGP core proteins represents the first committed step in arabinogalactan polysaccharide addition. AGP glycans play essential roles in both vegetative and reproductive plant growth. In Arabidopsis thaliana (Mouse-ear cress), this protein is Hydroxyproline O-galactosyltransferase GALT6.